The sequence spans 509 residues: Maturase K (509 aa).

It belongs to the intron maturase 2 family. MatK subfamily.

The protein resides in the plastid. The protein localises to the chloroplast. In terms of biological role, usually encoded in the trnK tRNA gene intron. Probably assists in splicing its own and other chloroplast group II introns. This is Maturase K from Galbulimima belgraveana (Northern pigeonberry ash).